A 176-amino-acid polypeptide reads, in one-letter code: Transcriptional repressor NrdR (176 aa).

The segment at 3 to 34 is a zinc-finger region; that stretch reads CPYCGSLETQVKDSRPTDDASAIRRRRVCPDC. In terms of domain architecture, ATP-cone spans 49-139; that stretch reads LTVLKKSGRR…VYRNFREARD (91 aa). The disordered stretch occupies residues 147–176; that stretch reads LDGAAQPEAPSKDDGGTDEPPAKTRAPTRA.

The protein belongs to the NrdR family. The cofactor is Zn(2+).

Its function is as follows. Negatively regulates transcription of bacterial ribonucleotide reductase nrd genes and operons by binding to NrdR-boxes. The chain is Transcriptional repressor NrdR from Methylocella silvestris (strain DSM 15510 / CIP 108128 / LMG 27833 / NCIMB 13906 / BL2).